Here is a 244-residue protein sequence, read N- to C-terminus: Phosphoadenosine 5'-phosphosulfate reductase (244 aa).

Residue C239 is the Nucleophile; cysteine thiosulfonate intermediate of the active site.

Belongs to the PAPS reductase family. CysH subfamily.

The protein localises to the cytoplasm. It carries out the reaction [thioredoxin]-disulfide + sulfite + adenosine 3',5'-bisphosphate + 2 H(+) = [thioredoxin]-dithiol + 3'-phosphoadenylyl sulfate. Its pathway is sulfur metabolism; hydrogen sulfide biosynthesis; sulfite from sulfate: step 3/3. In terms of biological role, catalyzes the formation of sulfite from phosphoadenosine 5'-phosphosulfate (PAPS) using thioredoxin as an electron donor. This chain is Phosphoadenosine 5'-phosphosulfate reductase, found in Salmonella dublin (strain CT_02021853).